Consider the following 258-residue polypeptide: HVA22-like protein j (258 aa).

Residues 153 to 258 (AANQPPTERN…RSNSRTQPAA (106 aa)) are disordered. Positions 156–169 (QPPTERNVNMNAQS) are enriched in polar residues. Residues 206–215 (WPPPTPPPTP) are compositionally biased toward pro residues.

It belongs to the DP1 family.

The sequence is that of HVA22-like protein j (HVA22J) from Arabidopsis thaliana (Mouse-ear cress).